The primary structure comprises 430 residues: GTPase Obg (430 aa).

The region spanning 1–158 (MFVDQVKISL…LEVTLELKLL (158 aa)) is the Obg domain. Residues 118–145 (RGGRGGRGNSRFATPRNPAPDFSENGEP) form a disordered region. Positions 159 to 329 (ADVGLVGFPS…LLYQIADKLE (171 aa)) constitute an OBG-type G domain. GTP is bound by residues 165–172 (GFPSVGKS), 190–194 (FTTIK), 212–215 (DLPG), 282–285 (NKMD), and 310–312 (STI). Positions 172 and 192 each coordinate Mg(2+). Residues 352–430 (KHTPSADKFT…ILGGEFEFVE (79 aa)) enclose the OCT domain.

Belongs to the TRAFAC class OBG-HflX-like GTPase superfamily. OBG GTPase family. Monomer. It depends on Mg(2+) as a cofactor.

The protein resides in the cytoplasm. Functionally, an essential GTPase which binds GTP, GDP and possibly (p)ppGpp with moderate affinity, with high nucleotide exchange rates and a fairly low GTP hydrolysis rate. Plays a role in control of the cell cycle, stress response, ribosome biogenesis and in those bacteria that undergo differentiation, in morphogenesis control. This is GTPase Obg from Staphylococcus epidermidis (strain ATCC 12228 / FDA PCI 1200).